An 80-amino-acid chain; its full sequence is Protein FAM229B (80 aa).

Positions 1 to 44 are disordered; that stretch reads MPFQFGTQPRRFPVEGGDSSIELEPGLSSSAACNGKEMSPTRQL.

This sequence belongs to the FAM229 family.

In Homo sapiens (Human), this protein is Protein FAM229B (FAM229B).